The chain runs to 257 residues: Neurotrophin-3 (257 aa).

Residues 1-18 (MSILFYVIFLAYLRGIQG) form the signal peptide. A propeptide spanning residues 19 to 138 (NNMDQRSLPE…VANRTSRRKR (120 aa)) is cleaved from the precursor. A disordered region spans residues 61–81 (STLPKAEAPREPERGGPAKSA). Basic and acidic residues predominate over residues 67–76 (EAPREPERGG). N-linked (GlcNAc...) asparagine glycosylation occurs at Asn131. 3 disulfide bridges follow: Cys152-Cys217, Cys195-Cys246, and Cys205-Cys248.

Belongs to the NGF-beta family. Brain and peripheral tissues.

It is found in the secreted. In terms of biological role, seems to promote the survival of visceral and proprioceptive sensory neurons. The protein is Neurotrophin-3 (NTF3) of Homo sapiens (Human).